Here is a 289-residue protein sequence, read N- to C-terminus: Purine nucleoside phosphorylase (289 aa).

Position 1 is an N-acetylmethionine (M1). Phosphate-binding positions include S33, H64, and 84 to 86; that span reads RFH. Y88 lines the a purine D-ribonucleoside pocket. A116 serves as a coordination point for phosphate. A purine D-ribonucleoside contacts are provided by E201 and M219. S220 contributes to the phosphate binding site. N243 is an a purine D-ribonucleoside binding site. Residue S251 is modified to Phosphoserine. A purine D-ribonucleoside is bound at residue H257.

Belongs to the PNP/MTAP phosphorylase family. As to quaternary structure, homotrimer. Expressed in red blood cells; overexpressed in red blood cells (cytoplasm) of patients with hereditary non-spherocytic hemolytic anemia of unknown etiology.

It localises to the cytoplasm. The catalysed reaction is inosine + phosphate = alpha-D-ribose 1-phosphate + hypoxanthine. The enzyme catalyses guanosine + phosphate = alpha-D-ribose 1-phosphate + guanine. It carries out the reaction 2'-deoxyguanosine + phosphate = 2-deoxy-alpha-D-ribose 1-phosphate + guanine. It catalyses the reaction 2'-deoxyinosine + phosphate = 2-deoxy-alpha-D-ribose 1-phosphate + hypoxanthine. It functions in the pathway purine metabolism; purine nucleoside salvage. With respect to regulation, inhibited by 5'-deaza-1'-aza-2c-deoxy-1'-(9-methylene)-Immucilin-G (DADMe-ImmG). Catalyzes the phosphorolytic breakdown of the N-glycosidic bond in the beta-(deoxy)ribonucleoside molecules, with the formation of the corresponding free purine bases and pentose-1-phosphate. Preferentially acts on 6-oxopurine nucleosides including inosine and guanosine. In Homo sapiens (Human), this protein is Purine nucleoside phosphorylase (PNP).